The chain runs to 195 residues: MNKMAGVVLAGGQSRRFGSPKAFAKFNGKYFFEIAVETLRTVVEDIYIVSHPSLIDCFRQKTAEKVIMDDERYRGQGPLAGIYTVMKECEAEWIFVLPCDMPYMRPEAAAKLAKYANEKFDAIICAHFGRIQPLVGIYHRRTCKQIEKLLQAQDNRMKSLFRHCHVHYVNEQDFWEDEIVFRNVNTPNEFDDIVT.

GTP is bound by residues 9–11, K21, D69, and D100; that span reads LAG. D100 contacts Mg(2+).

It belongs to the MobA family. The cofactor is Mg(2+).

It localises to the cytoplasm. The enzyme catalyses Mo-molybdopterin + GTP + H(+) = Mo-molybdopterin guanine dinucleotide + diphosphate. In terms of biological role, transfers a GMP moiety from GTP to Mo-molybdopterin (Mo-MPT) cofactor (Moco or molybdenum cofactor) to form Mo-molybdopterin guanine dinucleotide (Mo-MGD) cofactor. This is Probable molybdenum cofactor guanylyltransferase from Geobacillus sp. (strain WCH70).